The sequence spans 408 residues: Sporulation integral membrane protein YlbJ (408 aa).

Helical transmembrane passes span 6-26 (INTLLIASFFLFLTATVISHP), 43-63 (VVFPSLLPFFILSELLIGFGI), 81-101 (VPGVGGFVLAMGMASGNPAGA), 131-151 (LFIFGAVAVGFFQNASLGILL), 214-234 (VTSSVQTLLMVGGFIILFSVF), 294-314 (IIVSFILGFSGFSVQAQVAGI), 324-344 (PFFIARLLQGVYAAVFVMLLW), and 377-397 (LLVQIGPAVTLCALFTYIIIF).

The protein resides in the cell membrane. In terms of biological role, required for spore cortex formation. The protein is Sporulation integral membrane protein YlbJ (ylbJ) of Bacillus subtilis (strain 168).